A 129-amino-acid chain; its full sequence is Small ribosomal subunit protein uS9 (129 aa).

The protein belongs to the universal ribosomal protein uS9 family.

The protein is Small ribosomal subunit protein uS9 of Chlorobium limicola (strain DSM 245 / NBRC 103803 / 6330).